Consider the following 457-residue polypeptide: tRNA-2-methylthio-N(6)-dimethylallyladenosine synthase (457 aa).

The 118-residue stretch at 3 to 120 (KKVYVKTFGC…LPQMIDKRRE (118 aa)) folds into the MTTase N-terminal domain. Cys-12, Cys-49, Cys-83, Cys-157, Cys-161, and Cys-164 together coordinate [4Fe-4S] cluster. The region spanning 143 to 377 (RVDGPSAFVS…QATIEENVQR (235 aa)) is the Radical SAM core domain. In terms of domain architecture, TRAM spans 380–447 (DSMVGKIERI…PHSLRGELVL (68 aa)).

It belongs to the methylthiotransferase family. MiaB subfamily. As to quaternary structure, monomer. Requires [4Fe-4S] cluster as cofactor.

It localises to the cytoplasm. It carries out the reaction N(6)-dimethylallyladenosine(37) in tRNA + (sulfur carrier)-SH + AH2 + 2 S-adenosyl-L-methionine = 2-methylsulfanyl-N(6)-dimethylallyladenosine(37) in tRNA + (sulfur carrier)-H + 5'-deoxyadenosine + L-methionine + A + S-adenosyl-L-homocysteine + 2 H(+). Functionally, catalyzes the methylthiolation of N6-(dimethylallyl)adenosine (i(6)A), leading to the formation of 2-methylthio-N6-(dimethylallyl)adenosine (ms(2)i(6)A) at position 37 in tRNAs that read codons beginning with uridine. The sequence is that of tRNA-2-methylthio-N(6)-dimethylallyladenosine synthase from Paraburkholderia phytofirmans (strain DSM 17436 / LMG 22146 / PsJN) (Burkholderia phytofirmans).